The primary structure comprises 628 residues: Monoterpene synthase like 2, chloroplastic (628 aa).

Positions 379, 383, and 531 each coordinate Mg(2+). The short motif at 379–383 is the DDXXD motif element; that stretch reads DDIYD.

It belongs to the terpene synthase family. Tpsd subfamily. Mg(2+) serves as cofactor. Requires Mn(2+) as cofactor.

The protein resides in the plastid. Its subcellular location is the chloroplast. It functions in the pathway terpene metabolism; oleoresin biosynthesis. The protein operates within secondary metabolite biosynthesis; terpenoid biosynthesis. Its function is as follows. Monoterpene synthase (TPS) involved in the biosynthesis of monoterpene natural products included in conifer oleoresin secretions and volatile emissions; these compounds contribute to biotic and abiotic stress defense against herbivores and pathogens. This is Monoterpene synthase like 2, chloroplastic from Pinus banksiana (Jack pine).